The chain runs to 220 residues: Deoxyribose-phosphate aldolase (220 aa).

Catalysis depends on Asp89, which acts as the Proton donor/acceptor. The active-site Schiff-base intermediate with acetaldehyde is Lys151. Lys180 functions as the Proton donor/acceptor in the catalytic mechanism.

The protein belongs to the DeoC/FbaB aldolase family. DeoC type 1 subfamily.

The protein resides in the cytoplasm. It carries out the reaction 2-deoxy-D-ribose 5-phosphate = D-glyceraldehyde 3-phosphate + acetaldehyde. It functions in the pathway carbohydrate degradation; 2-deoxy-D-ribose 1-phosphate degradation; D-glyceraldehyde 3-phosphate and acetaldehyde from 2-deoxy-alpha-D-ribose 1-phosphate: step 2/2. Catalyzes a reversible aldol reaction between acetaldehyde and D-glyceraldehyde 3-phosphate to generate 2-deoxy-D-ribose 5-phosphate. The chain is Deoxyribose-phosphate aldolase from Streptococcus gordonii (strain Challis / ATCC 35105 / BCRC 15272 / CH1 / DL1 / V288).